Consider the following 192-residue polypeptide: tRNA (pseudouridine(54)-N(1))-methyltransferase (192 aa).

S-adenosyl-L-methionine contacts are provided by L127 and C181.

It belongs to the methyltransferase superfamily. TrmY family. As to quaternary structure, homodimer.

Its subcellular location is the cytoplasm. The enzyme catalyses pseudouridine(54) in tRNA + S-adenosyl-L-methionine = N(1)-methylpseudouridine(54) in tRNA + S-adenosyl-L-homocysteine + H(+). Its function is as follows. Specifically catalyzes the N1-methylation of pseudouridine at position 54 (Psi54) in tRNAs. The sequence is that of tRNA (pseudouridine(54)-N(1))-methyltransferase from Methanocella arvoryzae (strain DSM 22066 / NBRC 105507 / MRE50).